We begin with the raw amino-acid sequence, 161 residues long: Trivalent organoarsenical cleaving enzyme (161 aa).

The region spanning 2-119 (KYAHVGLNVT…DGNEWEFFYT (118 aa)) is the VOC domain. Fe(2+) is bound by residues His5 and His62. 2 residues coordinate roxarsone (III): Cys96 and Cys97. Glu115 serves as a coordination point for Fe(2+).

The cofactor is Fe(2+).

The enzyme catalyses methylarsonous acid + AH2 + O2 = arsenite + methanol + A + H(+). It catalyses the reaction roxarsone (III) + AH2 + O2 = 4-hydroxy-3-nitrocyclohexa-2,5-dien-1-one + arsenite + A + H(+). It carries out the reaction nitarsone (III) + AH2 + O2 = 4-nitrocyclohexa-2,5-dien-1-one + arsenite + A + H(+). The catalysed reaction is 4-aminophenylarsonous acid + AH2 + O2 = 4-aminocyclohexa-2,5-dien-1-one + arsenite + A. Its activity is regulated as follows. Inhibited in vitro by reagents that chemically modify histidine residues (diethylpyrocarbonate (DEPC)), aspartate or glutamate residues (1-ethyl-3-(3-(dimethylamino)propyl) carbodiimide (EDC)), or cysteine residues (N-ethylmaleimide (NEM) or iodoacetamide (IAA)). Functionally, nonheme iron-dependent dioxygenase that can break carbon-arsenic bonds, playing a role in the detoxification of environmental organoarsenical compounds. Catalyzes the oxygen-dependent demethylation of highly toxic methylarsonous acid (MAs(III)) to arsenite, which can then be exported out of the cell. Can also cleave the C-As bond in several trivalent aromatic arsenicals, including roxarsone (III), nitarsone (III) and (4-aminophenyl)arsonous acid. Organoarsenical degradation by this enzyme is proposed to have a significant impact on the arsenic biogeocycle that maintains a balance between organic and inorganic species. The polypeptide is Trivalent organoarsenical cleaving enzyme (Bacillus sp. (strain MD1)).